A 456-amino-acid chain; its full sequence is Tyrosine phenol-lyase (456 aa).

K257 carries the post-translational modification N6-(pyridoxal phosphate)lysine.

Belongs to the beta-eliminating lyase family. As to quaternary structure, homotetramer. Pyridoxal 5'-phosphate is required as a cofactor.

The catalysed reaction is L-tyrosine + H2O = phenol + pyruvate + NH4(+). The chain is Tyrosine phenol-lyase (tpl) from Citrobacter freundii.